The following is a 772-amino-acid chain: TSA1-like protein (772 aa).

A signal peptide spans Met1 to Cys24. The disordered stretch occupies residues Leu49–Asn72. 10 EFE repeat repeats span residues Gly98–Glu138, Ser139–Gln176, Gly177–Thr213, Gly214–Ser251, Thr252–Asp292, Val293–Lys330, Ala331–Glu368, Gly369–Asp407, Lys408–Lys439, and Asn440–Asn472. The interval Gly98–Asn472 is 10 X approximate EFE repeat. Residues Gln187–Asn476 adopt a coiled-coil conformation. Disordered regions lie at residues Asn465–Ser487 and His555–Glu585. Polar residues predominate over residues Ala466–Ser487. Positions Ser561–Glu585 are enriched in low complexity. Residues Asp688 to Ala748 adopt a coiled-coil conformation.

In terms of assembly, has no interaction with PYK10 and is not part of the PYK10 complex. Interacts directly or indirectly with MEB1 and MEB2. As to expression, expressed in roots. Detected in shoot apex.

It is found in the endoplasmic reticulum lumen. Responsible for the ER body formation. Regulates the number and shape of the ER bodies and the accumulation of PYK10 in ER bodies, but is not involved in the expression of PYK10. The sequence is that of TSA1-like protein (NAI2) from Arabidopsis thaliana (Mouse-ear cress).